Here is a 224-residue protein sequence, read N- to C-terminus: ATP phosphoribosyltransferase (224 aa).

The protein belongs to the ATP phosphoribosyltransferase family. Short subfamily. Heteromultimer composed of HisG and HisZ subunits.

The protein localises to the cytoplasm. It catalyses the reaction 1-(5-phospho-beta-D-ribosyl)-ATP + diphosphate = 5-phospho-alpha-D-ribose 1-diphosphate + ATP. Its pathway is amino-acid biosynthesis; L-histidine biosynthesis; L-histidine from 5-phospho-alpha-D-ribose 1-diphosphate: step 1/9. Its function is as follows. Catalyzes the condensation of ATP and 5-phosphoribose 1-diphosphate to form N'-(5'-phosphoribosyl)-ATP (PR-ATP). Has a crucial role in the pathway because the rate of histidine biosynthesis seems to be controlled primarily by regulation of HisG enzymatic activity. This is ATP phosphoribosyltransferase from Cupriavidus taiwanensis (strain DSM 17343 / BCRC 17206 / CCUG 44338 / CIP 107171 / LMG 19424 / R1) (Ralstonia taiwanensis (strain LMG 19424)).